We begin with the raw amino-acid sequence, 177 residues long: Interleukin-1 receptor antagonist protein (177 aa).

An N-terminal signal peptide occupies residues 1–25 (MRPSRSTRRHLISLLLFLFHSETAC). A disulfide bond links C91 and C141. Residue N109 is glycosylated (N-linked (GlcNAc...) asparagine).

Belongs to the IL-1 family.

It localises to the secreted. Its function is as follows. Anti-inflammatory antagonist of interleukin-1 family of proinflammatory cytokines such as interleukin-1beta/IL1B and interleukin-1alpha/IL1A. Protects from immune dysregulation and uncontrolled systemic inflammation triggered by IL1 for a range of innate stimulatory agents such as pathogens. The protein is Interleukin-1 receptor antagonist protein (IL1RN) of Oryctolagus cuniculus (Rabbit).